Consider the following 150-residue polypeptide: Large ribosomal subunit protein bL9 (150 aa).

The protein belongs to the bacterial ribosomal protein bL9 family.

Functionally, binds to the 23S rRNA. The protein is Large ribosomal subunit protein bL9 of Neisseria gonorrhoeae.